The following is a 399-amino-acid chain: Protein shisa-8 (399 aa).

A signal peptide spans 1-36; that stretch reads MERAGARGQRCGRRSHGLPLALRLALLLAGSPSGRA. Over 37–136 the chain is Extracellular; that stretch reads GAPEEQEIAG…APRDPARERS (100 aa). Asn-73 is a glycosylation site (N-linked (GlcNAc...) asparagine). The chain crosses the membrane as a helical span at residues 137–157; that stretch reads HTAVYAVCGVAALLVLVGIGA. Residues 158 to 399 are Cytoplasmic-facing; it reads RLGLERAHSP…STNSKAEVTV (242 aa). Disordered regions lie at residues 207–248 and 378–399; these read GDGV…GGSL and FYSS…EVTV. Polar residues predominate over residues 389-399; that stretch reads LSTNSKAEVTV.

Belongs to the shisa family. As to quaternary structure, interacts with AMPAR subunits GRIA1 and GRIA2. As to expression, brain-specific. Highly expressed in cerebellum and olfactory bulb.

The protein localises to the membrane. Functionally, may regulate trafficking and current kinetics of AMPA-type glutamate receptor (AMPAR) at synapses. The chain is Protein shisa-8 from Mus musculus (Mouse).